Here is a 307-residue protein sequence, read N- to C-terminus: Nicotinamide/nicotinic acid mononucleotide adenylyltransferase 2 (307 aa).

Residues Ser-16 and Phe-17 each coordinate NAD(+). His-24 contributes to the ATP binding site. 2 residues coordinate NAD(+): Trp-92 and Thr-95. 2 S-palmitoyl cysteine lipidation sites follow: Cys-164 and Cys-165. Residues Gly-200, Asp-202, Leu-212, Trp-213, and Arg-232 each coordinate NAD(+). 271 to 274 provides a ligand contact to ATP; it reads TKSR.

It belongs to the eukaryotic NMN adenylyltransferase family. Monomer. It depends on Mg(2+) as a cofactor. Post-translationally, degraded in response to injured neurite. Degradation is caused by polyubiquitination by MYCBP2 after recognition by FBXO45. In terms of processing, palmitoylated; palmitoylation is required for membrane association.

The protein localises to the golgi apparatus membrane. It is found in the cytoplasmic vesicle membrane. It localises to the cytoplasm. The protein resides in the cell projection. Its subcellular location is the axon. The enzyme catalyses beta-nicotinamide D-ribonucleotide + ATP + H(+) = diphosphate + NAD(+). The catalysed reaction is nicotinate beta-D-ribonucleotide + ATP + H(+) = deamido-NAD(+) + diphosphate. It participates in cofactor biosynthesis; NAD(+) biosynthesis; NAD(+) from nicotinamide D-ribonucleotide: step 1/1. It functions in the pathway cofactor biosynthesis; NAD(+) biosynthesis; deamido-NAD(+) from nicotinate D-ribonucleotide: step 1/1. Its activity is regulated as follows. Inhibited by P1-(adenosine-5')-P3-(nicotinamide-riboside-5')-triphosphate (Np3AD) and P1-(adenosine-5')-P4-(nicotinamide-riboside-5')-tetraphosphate (Np4AD). Functionally, nicotinamide/nicotinate-nucleotide adenylyltransferase that acts as an axon maintenance factor. Axon survival factor required for the maintenance of healthy axons: acts by delaying Wallerian axon degeneration, an evolutionarily conserved process that drives the loss of damaged axons. Catalyzes the formation of NAD(+) from nicotinamide mononucleotide (NMN) and ATP. Can also use the deamidated form; nicotinic acid mononucleotide (NaMN) as substrate but with a lower efficiency. Cannot use triazofurin monophosphate (TrMP) as substrate. Also catalyzes the reverse reaction, i.e. the pyrophosphorolytic cleavage of NAD(+). For the pyrophosphorolytic activity prefers NAD(+), NADH and NaAD as substrates and degrades nicotinic acid adenine dinucleotide phosphate (NHD) less effectively. Fails to cleave phosphorylated dinucleotides NADP(+), NADPH and NaADP(+). Also acts as an activator of ADP-ribosylation by supporting the catalytic activity of PARP16 and promoting mono-ADP-ribosylation of ribosomes by PARP16. May be involved in the maintenance of axonal integrity. The sequence is that of Nicotinamide/nicotinic acid mononucleotide adenylyltransferase 2 (Nmnat2) from Rattus norvegicus (Rat).